Here is a 134-residue protein sequence, read N- to C-terminus: Profilin (134 aa).

The protein belongs to the profilin family. Interacts with host Tpm1. Interacts with protein A25.

Its subcellular location is the host cytoplasm. Functionally, participates in either intracellular transport of viral proteins or intercellular spread of the virus. Cellular profilins modulate actin filament dynamics (polymerization and depolymerization) via direct binding to actin through an actin-binding domain as well as by modulation of other actin-binding proteins. In contrast to cellular homologs, the poxvirus profilins seem to bind actin only weakly. This chain is Profilin, found in Ectromelia virus (strain Moscow) (ECTV).